We begin with the raw amino-acid sequence, 141 residues long: MLMPKRTKYRKMMKGRNRGYARSGYTLAFGDIALKAVEAGRINSRQIESARISATRHIKRNGKIWIRVFPAKPLTAKPLETRMGKGKGSVDQWVMNIKPGRIIFEMAGVPEELAREALTLALHKLPFKTKIITAEMSNEIF.

The protein belongs to the universal ribosomal protein uL16 family. Part of the 50S ribosomal subunit.

Functionally, binds 23S rRNA and is also seen to make contacts with the A and possibly P site tRNAs. The sequence is that of Large ribosomal subunit protein uL16 from Sulfurimonas denitrificans (strain ATCC 33889 / DSM 1251) (Thiomicrospira denitrificans (strain ATCC 33889 / DSM 1251)).